A 790-amino-acid chain; its full sequence is Protein sel-1 homolog 1 (790 aa).

The signal sequence occupies residues 1 to 21 (MQVRVRLSLLLLCAVLLGSAA). The interval 22-51 (ATSDDKTNQDDSLDSKSSLPTDESVKDHTT) is disordered. Residues 22 to 734 (ATSDDKTNQD…LFTQLDMDQL (713 aa)) are Lumenal-facing. The segment at 23-733 (TSDDKTNQDD…DLFTQLDMDQ (711 aa)) is interaction with ERLEC1, OS9 and SYVN1. The residue at position 64 (S64) is a Phosphoserine. Acidic residues predominate over residues 67–78 (AEVESLLQDEED). The tract at residues 67–98 (AEVESLLQDEEDSSKTQEEEISFLESPNPSSK) is disordered. The Fibronectin type-II domain occupies 118 to 166 (AHGEPCHFPFLFLDKEYDECTSDGREDGRLWCATTYDYKTDEKWGFCET). 2 disulfides stabilise this stretch: C123–C149 and C137–C164. 9 Sel1-like repeats span residues 179-214 (AEMIYQAGMKILNGSNRKSQKREAYRYLQKAAGMNH), 215-250 (TKALERVSYALLFGDYLTQNIQAAKEMFEKLTEEGS), 251-286 (PKGQTGLGFLYASGLGVNSSQAKALVYYTFGALGGN), 287-322 (LIAHMILGYRYWAGIGVLQSCESALTHYRLVANHVA), 369-405 (VQAQVGLGQLHLHGGRGVEQNHQRAFDYFNLAANAGN), 406-442 (SHAMAFLGKMYSEGSDIVPQSNETALHYFKKAADMGN), 443-478 (PVGQSGLGMAYLYGRGVQVNYDLALKYFQKAAEQGW), 479-514 (VDGQLQLGSMYYNGIGVKRDYKQALKYFNLASQGGH), and 515-550 (ILAFYNLAQMHASGTGVMRSCHTAVELFKNVCERGR). N191 and N213 each carry an N-linked (GlcNAc...) asparagine glycan. N-linked (GlcNAc...) asparagine glycosylation occurs at N268. Positions 348 to 533 (NSGMLEEDLI…MHASGTGVMR (186 aa)) are important for homodimerization and oligomerization. N-linked (GlcNAc...) asparagine glycosylation occurs at N427. N604 is a glycosylation site (N-linked (GlcNAc...) asparagine). Sel1-like repeat units follow at residues 623–658 (TVARIKLGDYHFYGFGTDVDYETAFIHYRLASEQQH) and 660–695 (AQAMFNLGYMHEKGLGIKQDIHLAKRFYDMAAEASP). Residues 639 to 719 (TDVDYETAFI…VVYFLQYIRE (81 aa)) are interaction with SYVN1. Residues 734–790 (LLGPEWDLYLMTIIALLLGTVIAYRQRQHQDIPVPRPPGPRPAPPQQEGPPEQQPPQ) form a mediates retention in the endoplasmic reticulum region. Residues 735–755 (LGPEWDLYLMTIIALLLGTVI) traverse the membrane as a helical segment. The Cytoplasmic portion of the chain corresponds to 756 to 790 (AYRQRQHQDIPVPRPPGPRPAPPQQEGPPEQQPPQ). Residues 763–790 (QDIPVPRPPGPRPAPPQQEGPPEQQPPQ) form a disordered region. Residues 767–790 (VPRPPGPRPAPPQQEGPPEQQPPQ) are compositionally biased toward pro residues.

It belongs to the sel-1 family. As to quaternary structure, homodimer and homooligomer. May form a complex with ERLEC1, HSPA5, OS9, and SYVN1. Interacts with FOXRED2 and EDEM1. Interacts with LPL and LMF1; may stabilize the complex formed by LPL and LMF1 and thereby promote the export of LPL dimers. Component of the HRD1 complex, which comprises at least SYNV1/HRD1, DERL1/2, FAM8A1, HERPUD1/HERP, OS9, SEL1L and UBE2J1. SYNV1 assembles with SEL1L and FAM8A1 through its transmembrane domains, but interaction with its cytoplasmic domain is required to confer stability to FAM8A1 and enhance recruitment of HERPUD1. The interaction with SYNV1/HRD1 is direct. N-glycosylated. As to expression, highly expressed in pancreas, white adipose tissue, liver and spleen (at protein level). Detected in heart, brain, spleen, lung, liver, kidney and testis.

The protein resides in the endoplasmic reticulum membrane. Plays a role in the endoplasmic reticulum quality control (ERQC) system also called ER-associated degradation (ERAD) involved in ubiquitin-dependent degradation of misfolded endoplasmic reticulum proteins. Enhances SYVN1 stability. Plays a role in LPL maturation and secretion. Required for normal differentiation of the pancreas epithelium, and for normal exocrine function and survival of pancreatic cells. May play a role in Notch signaling. This is Protein sel-1 homolog 1 (Sel1l) from Mus musculus (Mouse).